The primary structure comprises 566 residues: DNA ligase B (566 aa).

Lysine 125 functions as the N6-AMP-lysine intermediate in the catalytic mechanism.

The protein belongs to the NAD-dependent DNA ligase family. LigB subfamily.

The catalysed reaction is NAD(+) + (deoxyribonucleotide)n-3'-hydroxyl + 5'-phospho-(deoxyribonucleotide)m = (deoxyribonucleotide)n+m + AMP + beta-nicotinamide D-nucleotide.. Catalyzes the formation of phosphodiester linkages between 5'-phosphoryl and 3'-hydroxyl groups in double-stranded DNA using NAD as a coenzyme and as the energy source for the reaction. The chain is DNA ligase B from Pseudomonas putida (strain GB-1).